The chain runs to 156 residues: ATP synthase subunit b (156 aa).

Residues 7-27 traverse the membrane as a helical segment; sequence IFFQMLVFFVLGWFTMKFVWP.

Belongs to the ATPase B chain family. F-type ATPases have 2 components, F(1) - the catalytic core - and F(0) - the membrane proton channel. F(1) has five subunits: alpha(3), beta(3), gamma(1), delta(1), epsilon(1). F(0) has three main subunits: a(1), b(2) and c(10-14). The alpha and beta chains form an alternating ring which encloses part of the gamma chain. F(1) is attached to F(0) by a central stalk formed by the gamma and epsilon chains, while a peripheral stalk is formed by the delta and b chains.

It localises to the cell inner membrane. Functionally, f(1)F(0) ATP synthase produces ATP from ADP in the presence of a proton or sodium gradient. F-type ATPases consist of two structural domains, F(1) containing the extramembraneous catalytic core and F(0) containing the membrane proton channel, linked together by a central stalk and a peripheral stalk. During catalysis, ATP synthesis in the catalytic domain of F(1) is coupled via a rotary mechanism of the central stalk subunits to proton translocation. Component of the F(0) channel, it forms part of the peripheral stalk, linking F(1) to F(0). This Bordetella bronchiseptica (strain ATCC BAA-588 / NCTC 13252 / RB50) (Alcaligenes bronchisepticus) protein is ATP synthase subunit b.